A 325-amino-acid polypeptide reads, in one-letter code: Undecaprenyl-phosphate 4-deoxy-4-formamido-L-arabinose transferase (325 aa).

2 helical membrane passes run 236 to 256 and 270 to 290; these read LSIF…LLIL and VFTL…GMGL.

It belongs to the glycosyltransferase 2 family.

The protein resides in the cell inner membrane. The catalysed reaction is UDP-4-deoxy-4-formamido-beta-L-arabinose + di-trans,octa-cis-undecaprenyl phosphate = 4-deoxy-4-formamido-alpha-L-arabinopyranosyl di-trans,octa-cis-undecaprenyl phosphate + UDP. It functions in the pathway glycolipid biosynthesis; 4-amino-4-deoxy-alpha-L-arabinose undecaprenyl phosphate biosynthesis; 4-amino-4-deoxy-alpha-L-arabinose undecaprenyl phosphate from UDP-4-deoxy-4-formamido-beta-L-arabinose and undecaprenyl phosphate: step 1/2. The protein operates within bacterial outer membrane biogenesis; lipopolysaccharide biosynthesis. Its function is as follows. Catalyzes the transfer of 4-deoxy-4-formamido-L-arabinose from UDP to undecaprenyl phosphate. The modified arabinose is attached to lipid A and is required for resistance to polymyxin and cationic antimicrobial peptides. The sequence is that of Undecaprenyl-phosphate 4-deoxy-4-formamido-L-arabinose transferase from Edwardsiella ictaluri (strain 93-146).